Consider the following 661-residue polypeptide: Ubiquitin carboxyl-terminal hydrolase 51 (661 aa).

The tract at residues 1-144 (MRGTQGAQEM…SENSLLEVGS (144 aa)) is disordered. Residues 21 to 30 (TSENLTSRGS) are compositionally biased toward polar residues. Positions 53–71 (PRRKPRPRPQPRSRSRGGR) are enriched in basic residues. The segment covering 75–96 (APPPPPAKPPPPPPAPPPPPLP) has biased composition (pro residues). Residues 149 to 267 (TGCCHVESFK…KETKEKILGL (119 aa)) form a UBP-type zinc finger. The Zn(2+) site is built by Cys-151, His-153, Cys-192, Cys-195, Cys-205, Cys-208, Cys-213, His-218, His-222, His-228, Cys-241, and Cys-244. Residues 320 to 656 (RGLINLGNTC…EGYLLFYHRQ (337 aa)) enclose the USP domain. Cys-329 (nucleophile) is an active-site residue. The active-site Proton acceptor is the His-615.

The protein belongs to the peptidase C19 family. Interacts with H2A.

The protein localises to the chromosome. The catalysed reaction is Thiol-dependent hydrolysis of ester, thioester, amide, peptide and isopeptide bonds formed by the C-terminal Gly of ubiquitin (a 76-residue protein attached to proteins as an intracellular targeting signal).. Its function is as follows. Specifically deubiquitinates 'Lys-14' (H2AK13Ub) and 'Lys-16'(H2AK15Ub) of histone H2A regulating the DNA damage response at double-strand breaks (DSBs). USP51 is recruited to chromatin after DNA damage and regulates the dynamic assembly/disassembly of TP53BP1 and BRCA1. Functions in DNA double-strand break repair also by mediating the deubiquitination and subsequent stabilization of DGCR8, leading to the recruitment of DGCR8 binding partners to double strand breaks such as RNF168 or MDC1. In addition, promotes the deubiquitination and stabilization of the transcriptional repressor ZEB1. The chain is Ubiquitin carboxyl-terminal hydrolase 51 from Mus musculus (Mouse).